Reading from the N-terminus, the 130-residue chain is Small ribosomal subunit protein uS8 (130 aa).

Belongs to the universal ribosomal protein uS8 family. In terms of assembly, part of the 30S ribosomal subunit. Contacts proteins S5 and S12.

Its function is as follows. One of the primary rRNA binding proteins, it binds directly to 16S rRNA central domain where it helps coordinate assembly of the platform of the 30S subunit. The protein is Small ribosomal subunit protein uS8 of Pseudomonas fluorescens (strain SBW25).